The chain runs to 489 residues: DNA-dependent metalloprotease SPRTN (489 aa).

N-acetylmethionine is present on Met-1. The region spanning 45–212 is the SprT-like domain; it reads LQALFVQFND…KTCGGTYIKI (168 aa). Position 111 (His-111) interacts with Zn(2+). Glu-112 is a catalytic residue. His-115 and His-130 together coordinate Zn(2+). Position 230 is an N6-acetyllysine (Lys-230). The SHP-box motif lies at 253-261; that stretch reads FSGKGYVLG. Ser-268 is subject to Phosphoserine. Residue Lys-303 forms a Glycyl lysine isopeptide (Lys-Gly) (interchain with G-Cter in SUMO2) linkage. The short motif at 325–332 is the PIP-box element; that stretch reads QNVLSNYF. Residue Lys-341 forms a Glycyl lysine isopeptide (Lys-Gly) (interchain with G-Cter in SUMO2); alternate linkage. Lys-341 participates in a covalent cross-link: Glycyl lysine isopeptide (Lys-Gly) (interchain with G-Cter in ubiquitin); alternate. The interval 357 to 409 is disordered; it reads GNIPKNSVSSSSQRRVSSSKISLRNSSKVTESASVMPSQDVSGSEDTFPNKRP. Lys-361 is covalently cross-linked (Glycyl lysine isopeptide (Lys-Gly) (interchain with G-Cter in SUMO2)). Residues 363 to 383 are compositionally biased toward low complexity; sequence SVSSSSQRRVSSSKISLRNSS. Phosphoserine; by CHEK1 is present on residues Ser-373 and Ser-374. Lys-376 participates in a covalent cross-link: Glycyl lysine isopeptide (Lys-Gly) (interchain with G-Cter in SUMO2); alternate. A Glycyl lysine isopeptide (Lys-Gly) (interchain with G-Cter in ubiquitin); alternate cross-link involves residue Lys-376. The residue at position 383 (Ser-383) is a Phosphoserine; by CHEK1. A compositionally biased stretch (polar residues) spans 384-403; sequence KVTESASVMPSQDVSGSEDT. A Nuclear localization signal motif is present at residues 402-413; the sequence is DTFPNKRPRLED. Lys-414 is covalently cross-linked (Glycyl lysine isopeptide (Lys-Gly) (interchain with G-Cter in ubiquitin)). Glycyl lysine isopeptide (Lys-Gly) (interchain with G-Cter in SUMO2) cross-links involve residues Lys-423 and Lys-424. The tract at residues 428-453 is disordered; sequence KSSGNDPKYSTTTAQNSSSSSSQSKM. Lys-435 is covalently cross-linked (Glycyl lysine isopeptide (Lys-Gly) (interchain with G-Cter in ubiquitin)). Residues 437 to 451 show a composition bias toward low complexity; sequence STTTAQNSSSSSSQS. A UBZ4-type zinc finger spans residues 453–480; sequence MVNCPVCQNEVLESQINEHLDWCLEGDS. Cys-456, Cys-459, His-471, and Cys-475 together coordinate Zn(2+). A Glycyl lysine isopeptide (Lys-Gly) (interchain with G-Cter in SUMO2) cross-link involves residue Lys-484.

This sequence belongs to the Spartan family. In terms of assembly, homodimer. Interacts (VIA PIP-box) with PCNA (when ubiquitinated). Interacts (via its SHP-box) with VCP/p97. Interacts with RAD18. Interacts with KCTD13 and POLD3. Zn(2+) serves as cofactor. Post-translationally, autocatalytically cleaved in response to double-stranded DNA-binding: autocatalytic cleavage takes place in trans and leads to inactivation. Monoubiquitinated; monoubiquitination promotes exclusion from chromatin. Deubiquitinated by VCPIP1: deubiquitination is required for subsequent acetylation and recruitment to chromatin and DNA damage sites. In terms of processing, acetylated following deubiquitination by VCPIP1, leading to recruitment to chromatin and DNA damage sites. Post-translationally, phosphorylation by CHEK1 promotes recruitment to chromatin.

It is found in the nucleus. The protein localises to the chromosome. With respect to regulation, DNA-binding activates the protease activity: single-stranded DNA-binding specifically activates ability to cleave covalent DNA-protein cross-links (DPCs). In contrast, double-stranded DNA-binding specifically activates autocatalytic cleavage, and subsequent inactivation. Functionally, DNA-dependent metalloendopeptidase that mediates the proteolytic cleavage of covalent DNA-protein cross-links (DPCs) during DNA synthesis, thereby playing a key role in maintaining genomic integrity. DPCs are highly toxic DNA lesions that interfere with essential chromatin transactions, such as replication and transcription, and which are induced by reactive agents, such as UV light or formaldehyde. Associates with the DNA replication machinery and specifically removes DPCs during DNA synthesis. Catalyzes proteolytic cleavage of the HMCES DNA-protein cross-link following unfolding by the BRIP1/FANCJ helicase. Acts as a pleiotropic protease for DNA-binding proteins cross-linked with DNA, such as TOP1, TOP2A, histones H3 and H4. Mediates degradation of DPCs that are not ubiquitinated, while it is not able to degrade ubiquitinated DPCs. SPRTN activation requires polymerase collision with DPCs followed by helicase bypass of DPCs. Involved in recruitment of VCP/p97 to sites of DNA damage. Also acts as an activator of CHEK1 during normal DNA replication by mediating proteolytic cleavage of CHEK1, thereby promoting CHEK1 removal from chromatin and subsequent activation. Does not activate CHEK1 in response to DNA damage. May also act as a 'reader' of ubiquitinated PCNA: recruited to sites of UV damage and interacts with ubiquitinated PCNA and RAD18, the E3 ubiquitin ligase that monoubiquitinates PCNA. Facilitates chromatin association of RAD18 and is required for efficient PCNA monoubiquitination, promoting a feed-forward loop to enhance PCNA ubiquitination and translesion DNA synthesis. The chain is DNA-dependent metalloprotease SPRTN from Homo sapiens (Human).